The following is a 1051-amino-acid chain: Serine/threonine-protein kinase ULK1 (1051 aa).

A Protein kinase domain is found at 16–278 (FSRKDLIGHG…FDEFFHHPFL (263 aa)). ATP-binding positions include 22–30 (IGHGAFAVV) and Lys-46. Catalysis depends on Asp-138, which acts as the Proton acceptor. Position 162 is an N6-acetyllysine (Lys-162). Disordered stretches follow at residues 283–323 (PIKK…EMPQ), 335–358 (AGFL…DDFV), and 394–554 (GLES…CRLH). Positions 287 to 416 (SPPVPVPSYP…TCSSSPSPSG (130 aa)) are interaction with GABARAP and GABARAPL2. Composition is skewed to low complexity over residues 295–318 (YPSS…PPSL), 340–349 (GSRDSGGSSK), and 400–423 (RTPS…PFSS). At Ser-317 the chain carries Phosphoserine; by AMPK. Residues Ser-403 and Ser-450 each carry the phosphoserine modification. Positions 437-459 (QVHNYQRIEQNLQSPTQQQTARS) are enriched in polar residues. Thr-456 is subject to Phosphothreonine. Phosphoserine is present on residues Ser-467, Ser-477, Ser-479, and Ser-521. Ser-555 bears the Phosphoserine; by AMPK mark. At Thr-574 the chain carries Phosphothreonine. An N6-acetyllysine modification is found at Lys-606. Thr-635 bears the Phosphothreonine mark. Residue Ser-637 is modified to Phosphoserine; by AMPK. Position 638 is a phosphoserine (Ser-638). 2 disordered regions span residues 661 to 686 (PDLS…DTRG) and 727 to 787 (APSA…TGSS). The segment covering 731–745 (GFGGTLHPGARGGGA) has biased composition (gly residues). Residue Ser-757 is modified to Phosphoserine; by MTOR. Ser-774 bears the Phosphoserine mark. Over residues 774–787 (SVGSSSSLGSTGSS) the composition is skewed to low complexity. Position 777 is a phosphoserine; by AMPK (Ser-777). A C-terminal domain; mediates interaction with SESN2 region spans residues 829–1051 (PDLPEETLME…LSALLSGVYA (223 aa)).

Belongs to the protein kinase superfamily. Ser/Thr protein kinase family. APG1/unc-51/ULK1 subfamily. Interacts with GABARAP and GABARAPL2. Interacts (via C-terminus) with ATG13. Part of a complex consisting of ATG13, ATG101, ULK1 and RB1CC1. Associates with the mammalian target of rapamycin complex 1 (mTORC1) through an interaction with RPTOR; the association depends on nutrient conditions and is reduced during starvation. Interacts with FEZ1; SCOC interferes with FEZ1-binding. Interacts with TBC1D14. Interacts (phosphorylated form) with TRIM5. When phosphorylated at Ser-317, interacts with MEFV and BECN1 simultaneously. Interacts with TRIM21 and IRF3, in the presence of TRIM21. Interacts with SESN2. Interacts with SQSTM1. Interacts with C9orf72. Interacts with WDR45. Interacts with ATG13; this interaction is increased in the absence of TMEM39A. Interacts with WIPI2. Interacts with ATP2A2. Interacts with AMBRA1. Interacts with Irgm1; promoting the coassembly of ULK1 and BECN1. In terms of processing, autophosphorylated. Phosphorylated under nutrient-rich conditions; dephosphorylated during starvation or following treatment with rapamycin. In response to nutrient limitation, phosphorylated and activated by AMPK, leading to activate autophagy. Under nutrient sufficiency, phosphorylated by MTOR/mTOR, disrupting the interaction with AMPK and preventing activation of ULK1. Post-translationally, ubiquitinated via 'Lys-63'-linkage by a complex composed of AMBRA1 and TRAF6 following autophagy induction, promoting ULK1 stability and kinase activity. Deubiquitinated by USP20; leading to ULK1 stability and autophagy initiation. Acetylated by KAT5/TIP60 under autophagy induction, promoting protein kinase activity.

It localises to the cytoplasm. It is found in the cytosol. Its subcellular location is the preautophagosomal structure. The catalysed reaction is L-seryl-[protein] + ATP = O-phospho-L-seryl-[protein] + ADP + H(+). It catalyses the reaction L-threonyl-[protein] + ATP = O-phospho-L-threonyl-[protein] + ADP + H(+). Its activity is regulated as follows. Acetylation by KAT5/TIP60 stimulates the protein kinase activity. The protein kinase activity is activated by unanchored 'Lys-63'-linked polyubiquitin chains: unanchored 'Lys-63'-linked polyubiquitin chains are catalyzed by TRIM32 in an AMBRA1-dependent manner. Serine/threonine-protein kinase involved in autophagy in response to starvation. Acts upstream of phosphatidylinositol 3-kinase PIK3C3 to regulate the formation of autophagophores, the precursors of autophagosomes. Part of regulatory feedback loops in autophagy: acts both as a downstream effector and negative regulator of mammalian target of rapamycin complex 1 (mTORC1) via interaction with RPTOR. Activated via phosphorylation by AMPK and also acts as a regulator of AMPK by mediating phosphorylation of AMPK subunits PRKAA1, PRKAB2 and PRKAG1, leading to negatively regulate AMPK activity. May phosphorylate ATG13/KIAA0652 and RPTOR; however such data need additional evidences. Plays a role early in neuronal differentiation and is required for granule cell axon formation. Also phosphorylates SESN2 and SQSTM1 to regulate autophagy. Phosphorylates FLCN, promoting autophagy. Phosphorylates AMBRA1 in response to autophagy induction, releasing AMBRA1 from the cytoskeletal docking site to induce autophagosome nucleation. Phosphorylates ATG4B, leading to inhibit autophagy by decreasing both proteolytic activation and delipidation activities of ATG4B. This chain is Serine/threonine-protein kinase ULK1 (Ulk1), found in Mus musculus (Mouse).